Here is a 154-residue protein sequence, read N- to C-terminus: Urease accessory protein UreE (154 aa).

Belongs to the UreE family.

Its subcellular location is the cytoplasm. Functionally, involved in urease metallocenter assembly. Binds nickel. Probably functions as a nickel donor during metallocenter assembly. The chain is Urease accessory protein UreE from Rhizobium meliloti (strain 1021) (Ensifer meliloti).